Consider the following 292-residue polypeptide: 4-hydroxy-tetrahydrodipicolinate synthase (292 aa).

Position 45 (threonine 45) interacts with pyruvate. Tyrosine 133 (proton donor/acceptor) is an active-site residue. Catalysis depends on lysine 161, which acts as the Schiff-base intermediate with substrate. A pyruvate-binding site is contributed by isoleucine 203.

Belongs to the DapA family. In terms of assembly, homotetramer; dimer of dimers.

The protein resides in the cytoplasm. It catalyses the reaction L-aspartate 4-semialdehyde + pyruvate = (2S,4S)-4-hydroxy-2,3,4,5-tetrahydrodipicolinate + H2O + H(+). Its pathway is amino-acid biosynthesis; L-lysine biosynthesis via DAP pathway; (S)-tetrahydrodipicolinate from L-aspartate: step 3/4. In terms of biological role, catalyzes the condensation of (S)-aspartate-beta-semialdehyde [(S)-ASA] and pyruvate to 4-hydroxy-tetrahydrodipicolinate (HTPA). The chain is 4-hydroxy-tetrahydrodipicolinate synthase from Klebsiella pneumoniae subsp. pneumoniae (strain ATCC 700721 / MGH 78578).